Consider the following 278-residue polypeptide: Large ribosomal subunit protein uL2 (278 aa).

The disordered stretch occupies residues 226 to 278 (NPIDHPHGGGEGRTSGGRHPVTPWGKPTKGKKTRSNKSTDKFILISRHKRKKK).

This sequence belongs to the universal ribosomal protein uL2 family. In terms of assembly, part of the 50S ribosomal subunit. Forms a bridge to the 30S subunit in the 70S ribosome.

In terms of biological role, one of the primary rRNA binding proteins. Required for association of the 30S and 50S subunits to form the 70S ribosome, for tRNA binding and peptide bond formation. It has been suggested to have peptidyltransferase activity; this is somewhat controversial. Makes several contacts with the 16S rRNA in the 70S ribosome. The sequence is that of Large ribosomal subunit protein uL2 from Rhodopseudomonas palustris (strain HaA2).